A 153-amino-acid polypeptide reads, in one-letter code: MRTTYDFAPLWRSTIGFDRLFDLVDAAQQAGTEDNYPPCNVERLSEDRYQISLAVAGFSADEIAITAEQSVLTVEGRKSEKQQREFLYQGISSRPFKRQFNLADYVQVKGASFDNGLLQIELVREIPEAMKPRRISISGSSASNVRQIDGKAA.

Positions 30–140 (AGTEDNYPPC…KPRRISISGS (111 aa)) constitute a sHSP domain.

This sequence belongs to the small heat shock protein (HSP20) family.

The polypeptide is Small heat shock protein HspB (hspB) (Bradyrhizobium diazoefficiens (strain JCM 10833 / BCRC 13528 / IAM 13628 / NBRC 14792 / USDA 110)).